Reading from the N-terminus, the 300-residue chain is 5'-adenylylsulfate reductase-like 5 (300 aa).

The signal sequence occupies residues 1–23 (MDSRVSILFVCAIAVSCFTSGSA). The region spanning 41 to 161 (FDLEAKCPPS…LIEFYEEATG (121 aa)) is the Thioredoxin domain. N-linked (GlcNAc...) asparagine glycosylation occurs at Asn-136. The helical transmembrane segment at 202 to 222 (FLVLSLLFICLQMAILVFPIA) threads the bilayer.

The protein resides in the membrane. In Arabidopsis thaliana (Mouse-ear cress), this protein is 5'-adenylylsulfate reductase-like 5 (APRL5).